The chain runs to 296 residues: Probable deoxyuridine 5'-triphosphate nucleotidohydrolase (296 aa).

The stretch at 66 to 102 (EIDKNIVKNLEDKVNCLEQDVQYLKNELKKKDADWQQ) forms a coiled coil.

This sequence belongs to the dUTPase family.

The catalysed reaction is dUTP + H2O = dUMP + diphosphate + H(+). The protein operates within pyrimidine metabolism; dUMP biosynthesis; dUMP from dCTP (dUTP route): step 2/2. This enzyme is involved in nucleotide metabolism: it produces dUMP, the immediate precursor of thymidine nucleotides and it decreases the intracellular concentration of dUTP so that uracil cannot be incorporated into DNA. The polypeptide is Probable deoxyuridine 5'-triphosphate nucleotidohydrolase (Acheta domesticus (House cricket)).